The primary structure comprises 405 residues: NADH-quinone oxidoreductase subunit D (405 aa).

Belongs to the complex I 49 kDa subunit family. NDH-1 is composed of 14 different subunits. Subunits NuoB, C, D, E, F, and G constitute the peripheral sector of the complex.

The protein resides in the cell inner membrane. The catalysed reaction is a quinone + NADH + 5 H(+)(in) = a quinol + NAD(+) + 4 H(+)(out). In terms of biological role, NDH-1 shuttles electrons from NADH, via FMN and iron-sulfur (Fe-S) centers, to quinones in the respiratory chain. The immediate electron acceptor for the enzyme in this species is believed to be ubiquinone. Couples the redox reaction to proton translocation (for every two electrons transferred, four hydrogen ions are translocated across the cytoplasmic membrane), and thus conserves the redox energy in a proton gradient. This Leptospira borgpetersenii serovar Hardjo-bovis (strain L550) protein is NADH-quinone oxidoreductase subunit D.